Here is an 817-residue protein sequence, read N- to C-terminus: Protein hunchback (817 aa).

3 disordered regions span residues 51-77, 93-132, and 187-252; these read PGTI…HSPL, HNGG…TSSA, and YSQQ…EDQD. Low complexity predominate over residues 62-76; the sequence is QQHSSMMASQPQHSP. Residues 103–119 show a composition bias toward polar residues; it reads FSDNSGAMTPSPNTNVG. The segment covering 189–201 has biased composition (low complexity); it reads QQQQQQQQRQLQQ. C2H2-type zinc fingers lie at residues 287–309, 316–338, 344–366, and 372–396; these read HKCK…ARTH, LQCP…IRKH, FQCD…RKSH, and YRCA…KYEH. Disordered stretches follow at residues 456 to 477, 491 to 513, 564 to 619, and 666 to 758; these read PLQQ…SSVA, QNLA…SSQQ, QLQQ…QQTP, and APTS…AGNS. Positions 564–576 are enriched in low complexity; it reads QLQQQQQNKQANE. The span at 577-595 shows a compositional bias: acidic residues; sequence NGEEDEEDNDEVDEDEEEF. Over residues 680–694 the composition is skewed to polar residues; it reads MPPTTSSPIHPSQVN. Positions 721–758 are enriched in low complexity; sequence PTTANTSASSTASSSGNSSNSSSTSTSSNSNSSSAGNS. 2 consecutive C2H2-type zinc fingers follow at residues 764–786 and 792–816; these read YECK…MGYH and FKCN…RNAH.

Belongs to the hunchback C2H2-type zinc-finger protein family.

Its subcellular location is the nucleus. Gap class segmentation protein that controls development of head structures. This chain is Protein hunchback (hb), found in Musca domestica (House fly).